We begin with the raw amino-acid sequence, 121 residues long: Putative iron-sulfur cluster insertion protein ErpA (121 aa).

Iron-sulfur cluster contacts are provided by C49, C113, and C115.

This sequence belongs to the HesB/IscA family. Homodimer. The cofactor is iron-sulfur cluster.

Functionally, required for insertion of 4Fe-4S clusters. The sequence is that of Putative iron-sulfur cluster insertion protein ErpA from Polaromonas sp. (strain JS666 / ATCC BAA-500).